The chain runs to 127 residues: Phosphoribosyl-AMP cyclohydrolase (127 aa).

Aspartate 96 lines the Mg(2+) pocket. Residue cysteine 97 coordinates Zn(2+). Mg(2+)-binding residues include aspartate 98 and aspartate 100. 2 residues coordinate Zn(2+): cysteine 113 and cysteine 120.

Belongs to the PRA-CH family. Homodimer. The cofactor is Mg(2+). Zn(2+) serves as cofactor.

The protein localises to the cytoplasm. The catalysed reaction is 1-(5-phospho-beta-D-ribosyl)-5'-AMP + H2O = 1-(5-phospho-beta-D-ribosyl)-5-[(5-phospho-beta-D-ribosylamino)methylideneamino]imidazole-4-carboxamide. Its pathway is amino-acid biosynthesis; L-histidine biosynthesis; L-histidine from 5-phospho-alpha-D-ribose 1-diphosphate: step 3/9. Catalyzes the hydrolysis of the adenine ring of phosphoribosyl-AMP. In Corynebacterium jeikeium (strain K411), this protein is Phosphoribosyl-AMP cyclohydrolase.